The sequence spans 383 residues: Lipid-A-disaccharide synthase (383 aa).

This sequence belongs to the LpxB family.

It catalyses the reaction a lipid X + a UDP-2-N,3-O-bis[(3R)-3-hydroxyacyl]-alpha-D-glucosamine = a lipid A disaccharide + UDP + H(+). The protein operates within bacterial outer membrane biogenesis; LPS lipid A biosynthesis. Its function is as follows. Condensation of UDP-2,3-diacylglucosamine and 2,3-diacylglucosamine-1-phosphate to form lipid A disaccharide, a precursor of lipid A, a phosphorylated glycolipid that anchors the lipopolysaccharide to the outer membrane of the cell. The sequence is that of Lipid-A-disaccharide synthase from Alcanivorax borkumensis (strain ATCC 700651 / DSM 11573 / NCIMB 13689 / SK2).